Reading from the N-terminus, the 200-residue chain is RNA-binding protein with multiple splicing 2 (200 aa).

The region spanning 22 to 99 (RTLFVSGLPV…QTLRLEFAKA (78 aa)) is the RRM domain. The segment at 32–42 (DIKPRELYLLF) is important for homodimerization.

Homodimer. As to expression, expressed in developing heart.

The protein resides in the cytoplasm. It is found in the nucleus. It localises to the stress granule. In terms of biological role, RNA-binding protein involved in the regulation of smooth muscle cell differentiation and proliferation in the gastrointestinal system. Binds NOG mRNA, the major inhibitor of the bone morphogenetic protein (BMP) pathway. Mediates an increase of NOG mRNA levels, thereby contributing to the negative regulation of BMP signaling pathway and promoting reversible dedifferentiation and proliferation of smooth muscle cells. Acts as a pre-mRNA alternative splicing regulator. Mediates ACTN1 and FLNB alternative splicing. Likely binds to mRNA tandem CAC trinucleotide or CA dinucleotide motifs. The protein is RNA-binding protein with multiple splicing 2 of Gallus gallus (Chicken).